Consider the following 331-residue polypeptide: MVSSTSELITQPVNREEVVPSRKRIKLPAWLEVVKPRLIPLLLATTVGGMALSEEWPLPSPRLACTLGGGALAAAAAGALNCLWEQDLDKRMKRTSNRALPSGRLSQSSVFIGAVACTLVSSALLVSGVNCLAAGLTLLGLCSYVLLYTAFLKPRTSQNIVFGGVAGAIPPLVGASAAAGHIGLGGWWLFSLVMVWTPAHFWALAILLKEDYRSVGIPMLPTVSGPFVTAKAISVYGYLTVFLSFLGCFVLPEGGLLYGILLLPYNSRLLQLVSRLRDNPEDLDRAKGLFRWSILYMFGVCFLLVISRLQVSIVFNDQLIALIKDFSIGFS.

Helical transmembrane passes span 63–83, 109–129, 132–152, 160–180, 188–208, 215–235, 241–261, and 294–314; these read LACT…LNCL, SVFI…VSGV, LAAG…TAFL, IVFG…AAAG, WLFS…AILL, VGIP…AISV, VFLS…YGIL, and ILYM…VSIV.

Belongs to the UbiA prenyltransferase family. Protoheme IX farnesyltransferase subfamily.

The protein resides in the cell inner membrane. It catalyses the reaction heme b + (2E,6E)-farnesyl diphosphate + H2O = Fe(II)-heme o + diphosphate. Its pathway is porphyrin-containing compound metabolism; heme O biosynthesis; heme O from protoheme: step 1/1. Converts heme B (protoheme IX) to heme O by substitution of the vinyl group on carbon 2 of heme B porphyrin ring with a hydroxyethyl farnesyl side group. This Prochlorococcus marinus (strain NATL1A) protein is Protoheme IX farnesyltransferase.